Reading from the N-terminus, the 406-residue chain is Argininosuccinate synthase (406 aa).

ATP contacts are provided by residues 10–18 (AYSGGLDTS) and Ala-37. 2 residues coordinate L-citrulline: Tyr-88 and Ser-93. Gly-118 serves as a coordination point for ATP. Thr-120, Asn-124, and Asp-125 together coordinate L-aspartate. Residue Asn-124 coordinates L-citrulline. L-citrulline contacts are provided by Arg-128, Ser-180, Ser-189, Glu-265, and Tyr-277.

It belongs to the argininosuccinate synthase family. Type 1 subfamily. Homotetramer.

The protein resides in the cytoplasm. It catalyses the reaction L-citrulline + L-aspartate + ATP = 2-(N(omega)-L-arginino)succinate + AMP + diphosphate + H(+). It functions in the pathway amino-acid biosynthesis; L-arginine biosynthesis; L-arginine from L-ornithine and carbamoyl phosphate: step 2/3. The chain is Argininosuccinate synthase from Methylobacillus flagellatus (strain ATCC 51484 / DSM 6875 / VKM B-1610 / KT).